An 86-amino-acid polypeptide reads, in one-letter code: Putative protein adenylyltransferase MJ1215 (86 aa).

The GSX(10)DXD motif signature appears at 35 to 49 (GSYARGEQKETSDID). Mg(2+) is bound by residues aspartate 47, aspartate 49, and aspartate 79.

This sequence belongs to the MntA antitoxin family. As to quaternary structure, probably forms a complex with cognate toxin MJ1216. Requires Mg(2+) as cofactor.

It carries out the reaction L-tyrosyl-[protein] + ATP = O-(5'-adenylyl)-L-tyrosyl-[protein] + diphosphate. The enzyme catalyses O-(5'-adenylyl)-L-tyrosyl-[protein] + ATP = O-[5'-(adenylyl-(5'-&gt;3')-adenylyl)]-L-tyrosyl-[protein] + diphosphate. Its function is as follows. Probable antitoxin component of a putative type VII toxin-antitoxin (TA) system. Neutralizes cognate toxic MJ1216 by di-AMPylation. The polypeptide is Putative protein adenylyltransferase MJ1215 (Methanocaldococcus jannaschii (strain ATCC 43067 / DSM 2661 / JAL-1 / JCM 10045 / NBRC 100440) (Methanococcus jannaschii)).